Reading from the N-terminus, the 74-residue chain is Protein SOM1, mitochondrial (74 aa).

In terms of assembly, component of the mitochondrial inner membrane peptidase (IMP) complex which at least consists of IMP1, IMP2 and SOM1.

It localises to the mitochondrion inner membrane. In terms of biological role, non-catalytic component of the mitochondrial inner membrane peptidase (IMP) complex. IMP catalyzes the removal of signal peptides required for the targeting of proteins from the mitochondrial matrix, across the inner membrane, into the inter-membrane space. SOM1 facilitates cleavage of a subset of IMP substrates. In Saccharomyces cerevisiae (strain ATCC 204508 / S288c) (Baker's yeast), this protein is Protein SOM1, mitochondrial (SOM1).